Reading from the N-terminus, the 501-residue chain is Lysine--tRNA ligase (501 aa).

Residues Glu410 and Glu417 each coordinate Mg(2+).

Belongs to the class-II aminoacyl-tRNA synthetase family. In terms of assembly, homodimer. It depends on Mg(2+) as a cofactor.

The protein resides in the cytoplasm. It catalyses the reaction tRNA(Lys) + L-lysine + ATP = L-lysyl-tRNA(Lys) + AMP + diphosphate. The sequence is that of Lysine--tRNA ligase from Shewanella halifaxensis (strain HAW-EB4).